Here is a 1173-residue protein sequence, read N- to C-terminus: MAVDTLSPDWDFDRVDDGSQKIHAEVQLKNYGRFLEEYTSQLRRIEDALDDLIGDVWDFNLDPIALKLLPYEQSSLLELIKTENKVLNKVITVYAALCCEIKKLKYEAETKFYNGLLFYGEGATDSSMVEGDCQIQMGRFVSFLQELSCFVTRCYEVVMNVIHQLAALYISNKIGPKIIETTGVHFQTMYEHLGELLTVLLTLDEIVDNHVTLKDHWTMYKRLLKSVHHNPSKFGIQEEKLKPFEKFLLKLEGQLLDGMIFQACIEQQFDSLNGGISVSKNSTFAEEFAHSIRSIFANVEAKLGEPSEIDQRDKYVGICGLFVLHFQIFRTVDKKFYKSLLDICKKVPAITLTANIIWFPDNFLIHKMPAAAKLLDRKSLQAIKIHRDTFLQQKAQSLNKDVQSYYVFVSSWMMKMESMLSKEQRMDTFAEDLTNRCNVFIQGFLYAYSISTIIKTTMNLYMSMQKPMTKTSVKALCRLIELLKAIEHMFYRRSMVVADSVSHITQHLQHQALSSISVAKKRVISDKKYSEQRLDVLSALVLAENTLNGPSTKQRRLIVSLALSVGTQMKTFKDEELFPLQVVMKKLDLISELRERVQAQCDCCFLYWHRAVFPIYLDDVYENAVDAARLHYMFSALRDCVPAMMHSRHLESHELLLDCYDKEIMDILNEHLLDKLCKEIEKDLRLSVHTHLKLDDRNPFKVGRKDLALFFSLNPIRFFNRFIDIRAYVTHYLDKTFYNLTTVALHDWATYSEMRNLATQRYGLVMTEAHLPSQTLEQGLDVLEIMRNIHIFVSRYLYNLNNQIFIERTSNNKHLNTINIRHIANSIRTHGTGIMNTTVNFTYQFLKKKFYIFSQFMYDEHIKSRLIKDIRFFREIKDQNDHKYPFDRAEKFNRGIRKLGITPEGQSYLDQFRQLISQIGNAMGYIRMIRSGGLHCSSNAIRFVPDLEDIVSFEELVKEEGLAEETLRAARHLDSVLSDHTRNSAEGTEYFKMLVDVFAPEFRRPKNIHLRNFYIIVPPLTLNFVEHSISCKEKLNKKNKLGAAFTDDGFAMGVAYTLKLLDQYQEFDSLHWFQSVREKYIKEIRAVAKQQNVQSTSQDEKLLQTMNLTQKRLEVYLQEFELLYFSLSSARIFFRADKTAAEENQEKKEKEEETKTSNGDGPESTVSADPVVK.

Ala2 is modified (N-acetylalanine). At Ser7 the chain carries Phosphoserine. Positions 27–56 (QLKNYGRFLEEYTSQLRRIEDALDDLIGDV) form a coiled coil. Positions 705-1173 (KDLALFFSLN…STVSADPVVK (469 aa)) are sufficient for interaction with WASHC5. Basic and acidic residues predominate over residues 1141–1155 (AEENQEKKEKEEETK). Residues 1141-1173 (AEENQEKKEKEEETKTSNGDGPESTVSADPVVK) form a disordered region. Thr1154 carries the phosphothreonine modification.

This sequence belongs to the SWIP family. Component of the WASH core complex also described as WASH regulatory complex (SHRC) composed of WASH (WASHC1, WASH2P or WASH3P), WASHC2 (WASHC2A or WASHC2C), WASHC3, WASHC4 and WASHC5. The WASH core complex associates via WASHC2 with the F-actin-capping protein dimer (formed by CAPZA1, CAPZA2 or CAPZA3 and CAPZB) in a transient or substoichiometric manner which was initially described as WASH complex.

Its subcellular location is the early endosome. Acts as a component of the WASH core complex that functions as a nucleation-promoting factor (NPF) at the surface of endosomes, where it recruits and activates the Arp2/3 complex to induce actin polymerization, playing a key role in the fission of tubules that serve as transport intermediates during endosome sorting. The polypeptide is WASH complex subunit 4 (Mus musculus (Mouse)).